The sequence spans 511 residues: Bifunctional purine biosynthesis protein PurH (511 aa).

Positions Met-1 to Val-145 constitute an MGS-like domain.

It belongs to the PurH family.

It carries out the reaction (6R)-10-formyltetrahydrofolate + 5-amino-1-(5-phospho-beta-D-ribosyl)imidazole-4-carboxamide = 5-formamido-1-(5-phospho-D-ribosyl)imidazole-4-carboxamide + (6S)-5,6,7,8-tetrahydrofolate. The enzyme catalyses IMP + H2O = 5-formamido-1-(5-phospho-D-ribosyl)imidazole-4-carboxamide. The protein operates within purine metabolism; IMP biosynthesis via de novo pathway; 5-formamido-1-(5-phospho-D-ribosyl)imidazole-4-carboxamide from 5-amino-1-(5-phospho-D-ribosyl)imidazole-4-carboxamide (10-formyl THF route): step 1/1. Its pathway is purine metabolism; IMP biosynthesis via de novo pathway; IMP from 5-formamido-1-(5-phospho-D-ribosyl)imidazole-4-carboxamide: step 1/1. In Bacillus thuringiensis (strain Al Hakam), this protein is Bifunctional purine biosynthesis protein PurH.